The primary structure comprises 467 residues: Asparagine--tRNA ligase (467 aa).

This sequence belongs to the class-II aminoacyl-tRNA synthetase family. In terms of assembly, homodimer.

The protein resides in the cytoplasm. It carries out the reaction tRNA(Asn) + L-asparagine + ATP = L-asparaginyl-tRNA(Asn) + AMP + diphosphate + H(+). This is Asparagine--tRNA ligase from Bacteroides fragilis (strain ATCC 25285 / DSM 2151 / CCUG 4856 / JCM 11019 / LMG 10263 / NCTC 9343 / Onslow / VPI 2553 / EN-2).